Consider the following 188-residue polypeptide: Elongation factor P (188 aa).

Position 34 is an N6-(3,6-diaminohexanoyl)-5-hydroxylysine (lysine 34).

Belongs to the elongation factor P family. Post-translationally, may be beta-lysylated on the epsilon-amino group of Lys-34 by the combined action of EpmA and EpmB, and then hydroxylated on the C5 position of the same residue by EpmC (if this protein is present). Lysylation is critical for the stimulatory effect of EF-P on peptide-bond formation. The lysylation moiety may extend toward the peptidyltransferase center and stabilize the terminal 3-CCA end of the tRNA. Hydroxylation of the C5 position on Lys-34 may allow additional potential stabilizing hydrogen-bond interactions with the P-tRNA.

It is found in the cytoplasm. Its pathway is protein biosynthesis; polypeptide chain elongation. Functionally, involved in peptide bond synthesis. Alleviates ribosome stalling that occurs when 3 or more consecutive Pro residues or the sequence PPG is present in a protein, possibly by augmenting the peptidyl transferase activity of the ribosome. Modification of Lys-34 is required for alleviation. This chain is Elongation factor P, found in Vibrio campbellii (strain ATCC BAA-1116).